Reading from the N-terminus, the 168-residue chain is Phosphopantetheine adenylyltransferase (168 aa).

Substrate is bound at residue T10. ATP is bound by residues 10 to 11 (TF) and H18. Substrate contacts are provided by K42, L74, and R88. ATP contacts are provided by residues 89 to 91 (GLR), E99, and 124 to 130 (NSFISST).

The protein belongs to the bacterial CoaD family. In terms of assembly, homohexamer. Mg(2+) serves as cofactor.

It localises to the cytoplasm. It carries out the reaction (R)-4'-phosphopantetheine + ATP + H(+) = 3'-dephospho-CoA + diphosphate. It functions in the pathway cofactor biosynthesis; coenzyme A biosynthesis; CoA from (R)-pantothenate: step 4/5. Reversibly transfers an adenylyl group from ATP to 4'-phosphopantetheine, yielding dephospho-CoA (dPCoA) and pyrophosphate. The sequence is that of Phosphopantetheine adenylyltransferase from Shewanella frigidimarina (strain NCIMB 400).